Here is a 179-residue protein sequence, read N- to C-terminus: Lebocin-3 (179 aa).

An N-terminal signal peptide occupies residues 1–16 (MYKFLVFSSVLVLFFA). A propeptide spanning residues 17 to 120 (QASCQRFIQP…QPIESHRNTR (104 aa)) is cleaved from the precursor. The O-linked (GalNAc...) threonine glycan is linked to threonine 135. A propeptide spanning residues 153 to 179 (RRHASEDQEELRQYNEHFLIPRDIFQE) is cleaved from the precursor.

The protein belongs to the lebocin family. In terms of processing, O-glycosylation is important for the antibacterial activity of lebocin. As to expression, hemolymph. Produced in fat body.

It is found in the secreted. Its function is as follows. Antibacterial peptide. The protein is Lebocin-3 (LEB3) of Bombyx mori (Silk moth).